Consider the following 1203-residue polypeptide: Cingulin (1203 aa).

Residues 7–357 (MAEPRGPVDH…VMISSGSTKA (351 aa)) form a head region. The tract at residues 25–48 (EPVSGAEMGTLRRGGRRPAKDARA) is disordered. Residues 48 to 62 (ASTYGVAVRVQGIAG) carry the ZIM motif. The interval 54 to 67 (AVRVQGIAGQPFVV) is interaction with TJP1/ZO1. Positions 89 to 268 (EASGALGSDF…PPSGFSRSRQ (180 aa)) are disordered. S96, S135, S137, S140, S155, and S165 each carry phosphoserine. Residues 166 to 191 (PGSTIDTAPLSSVDSLINKFDSQLGG) show a composition bias toward polar residues. Basic and acidic residues predominate over residues 207–231 (EQRKRSKSLDSRLPRDTLEERERQS). Residues S214, S217, S258, S276, S338, and S351 each carry the phosphoserine modification. Positions 246–267 (GSSKQPSQSQSPSPPSGFSRSR) are enriched in low complexity. Residues 358–1160 (VAGQGELTRK…SLEKDSWRKA (803 aa)) adopt a coiled-coil conformation. K579 bears the N6-acetyllysine mark. Residues 883–903 (ARREVADAQRQAKDWASEAEK) show a composition bias toward basic and acidic residues. Disordered regions lie at residues 883–908 (ARREVADAQRQAKDWASEAEKTSGGL) and 1160–1181 (ASRSAAESALKHEGLSSDEEFD). The tail stretch occupies residues 1161-1203 (SRSAAESALKHEGLSSDEEFDSVYDPSSIASLLTESNLQTSSC). S1175, S1176, and S1182 each carry phosphoserine.

It belongs to the cingulin family. Homodimer. Interacts with TJP1/ZO1 and SPEF1.

It is found in the cell junction. It localises to the tight junction. Probably plays a role in the formation and regulation of the tight junction (TJ) paracellular permeability barrier. This is Cingulin from Papio anubis (Olive baboon).